Reading from the N-terminus, the 246-residue chain is Bis(5'-nucleosyl)-tetraphosphatase PrpE [asymmetrical] (246 aa).

The protein belongs to the PrpE family. Requires Ni(2+) as cofactor.

The enzyme catalyses P(1),P(4)-bis(5'-guanosyl) tetraphosphate + H2O = GMP + GTP + 2 H(+). Functionally, asymmetrically hydrolyzes Ap4p to yield AMP and ATP. This is Bis(5'-nucleosyl)-tetraphosphatase PrpE [asymmetrical] from Bacillus cereus (strain Q1).